Reading from the N-terminus, the 124-residue chain is Histone H2A (124 aa).

Residues 1 to 18 (MSGRGKSGKARTKAKSRS) are compositionally biased toward basic residues. The segment at 1-21 (MSGRGKSGKARTKAKSRSSRA) is disordered. S2 carries the post-translational modification N-acetylserine. The residue at position 2 (S2) is a Phosphoserine. At Q104 the chain carries N5-methylglutamine. K119 is covalently cross-linked (Glycyl lysine isopeptide (Lys-Gly) (interchain with G-Cter in ubiquitin)).

The protein belongs to the histone H2A family. As to quaternary structure, the nucleosome is a histone octamer containing two molecules each of H2A, H2B, H3 and H4 assembled in one H3-H4 heterotetramer and two H2A-H2B heterodimers. The octamer wraps approximately 147 bp of DNA. Monoubiquitination of Lys-119 gives a specific tag for epigenetic transcriptional repression. Post-translationally, phosphorylation of Ser-2 directly represses transcription.

It localises to the nucleus. It is found in the chromosome. Its function is as follows. Core component of nucleosome. Nucleosomes wrap and compact DNA into chromatin, limiting DNA accessibility to the cellular machineries which require DNA as a template. Histones thereby play a central role in transcription regulation, DNA repair, DNA replication and chromosomal stability. DNA accessibility is regulated via a complex set of post-translational modifications of histones, also called histone code, and nucleosome remodeling. This chain is Histone H2A, found in Paracentrotus lividus (Common sea urchin).